The primary structure comprises 478 residues: GDP-fucose protein O-fucosyltransferase 3 (478 aa).

At 1–8 (MVWIQRRR) the chain is on the cytoplasmic side. The helical; Signal-anchor for type II membrane protein transmembrane segment at 9-31 (LLASCLCITATVFLLVTLQVVVE) threads the bilayer. The Lumenal segment spans residues 32–478 (LGKFERKKFK…QEFWALVFKD (447 aa)). 2 N-linked (GlcNAc...) asparagine glycosylation sites follow: Asn110 and Asn168. Cys389 and Cys392 are oxidised to a cystine.

Belongs to the glycosyltransferase 10 family.

Its subcellular location is the endoplasmic reticulum membrane. It catalyses the reaction L-threonyl-[protein] + GDP-beta-L-fucose = 3-O-(alpha-L-fucosyl)-L-threonyl-[protein] + GDP + H(+). It carries out the reaction L-seryl-[protein] + GDP-beta-L-fucose = 3-O-(alpha-L-fucosyl)-L-seryl-[protein] + GDP + H(+). It functions in the pathway protein modification; protein glycosylation. In terms of biological role, protein O-fucosyltransferase that specifically catalyzes O-fucosylation of serine or threonine residues in EMI domains of target proteins, such as MMRN1, MMRN2 and EMID1. Attaches fucose through an O-glycosidic linkage. O-fucosylation of EMI domain-containing proteins may be required for facilitating protein folding and secretion. May also show alpha-(1,3)-fucosyltransferase activity toward the innermost N-acetyl glucosamine (GlcNAc) residue in biantennary N-glycan acceptors. However, this was tested with a library of synthetic substrates and this activity is unsure in vivo. May be involved in biosynthesis of Lewis X-carrying biantennary N-glycans that regulate neuron stem cell self-renewal during brain development. This is GDP-fucose protein O-fucosyltransferase 3 (FUT10) from Canis lupus familiaris (Dog).